The chain runs to 353 residues: Photosystem II protein D1 (353 aa).

Threonine 2 carries the N-acetylthreonine modification. Threonine 2 is subject to Phosphothreonine. The next 3 membrane-spanning stretches (helical) occupy residues 29–46 (YIGW…TATS), 118–133 (HFLL…EWEL), and 142–156 (WIAV…AATA). Position 118 (histidine 118) interacts with chlorophyll a. Position 126 (tyrosine 126) interacts with pheophytin a. Positions 170 and 189 each coordinate [CaMn4O5] cluster. A helical transmembrane segment spans residues 197–218 (FHMLGVAGVFGGSLFSAMHGSL). Position 198 (histidine 198) interacts with chlorophyll a. Residues histidine 215 and 264–265 (SF) each bind a quinone. Fe cation is bound at residue histidine 215. A Fe cation-binding site is contributed by histidine 272. The chain crosses the membrane as a helical span at residues 274-288 (FLAAWPVVGIWFTAL). [CaMn4O5] cluster is bound by residues histidine 332, glutamate 333, aspartate 342, and alanine 344. A propeptide spanning residues 345–353 (SVEAPSINA) is cleaved from the precursor.

It belongs to the reaction center PufL/M/PsbA/D family. In terms of assembly, PSII is composed of 1 copy each of membrane proteins PsbA, PsbB, PsbC, PsbD, PsbE, PsbF, PsbH, PsbI, PsbJ, PsbK, PsbL, PsbM, PsbT, PsbX, PsbY, PsbZ, Psb30/Ycf12, at least 3 peripheral proteins of the oxygen-evolving complex and a large number of cofactors. It forms dimeric complexes. It depends on The D1/D2 heterodimer binds P680, chlorophylls that are the primary electron donor of PSII, and subsequent electron acceptors. It shares a non-heme iron and each subunit binds pheophytin, quinone, additional chlorophylls, carotenoids and lipids. D1 provides most of the ligands for the Mn4-Ca-O5 cluster of the oxygen-evolving complex (OEC). There is also a Cl(-1) ion associated with D1 and D2, which is required for oxygen evolution. The PSII complex binds additional chlorophylls, carotenoids and specific lipids. as a cofactor. In terms of processing, tyr-161 forms a radical intermediate that is referred to as redox-active TyrZ, YZ or Y-Z. C-terminally processed by CTPA; processing is essential to allow assembly of the oxygen-evolving complex and thus photosynthetic growth.

The protein localises to the plastid. It is found in the chloroplast thylakoid membrane. The catalysed reaction is 2 a plastoquinone + 4 hnu + 2 H2O = 2 a plastoquinol + O2. Photosystem II (PSII) is a light-driven water:plastoquinone oxidoreductase that uses light energy to abstract electrons from H(2)O, generating O(2) and a proton gradient subsequently used for ATP formation. It consists of a core antenna complex that captures photons, and an electron transfer chain that converts photonic excitation into a charge separation. The D1/D2 (PsbA/PsbD) reaction center heterodimer binds P680, the primary electron donor of PSII as well as several subsequent electron acceptors. This chain is Photosystem II protein D1, found in Chara vulgaris (Common stonewort).